The primary structure comprises 270 residues: Aliphatic sulfonates import ATP-binding protein SsuB (270 aa).

Residues 17–238 form the ABC transporter domain; that stretch reads LASKGLRKTF…ARGSHRLAAL (222 aa). 49-56 serves as a coordination point for ATP; that stretch reads GRSGCGKS. Positions 248-270 are disordered; that stretch reads STPGTAPEPDPVAPLPTQLRWAH.

It belongs to the ABC transporter superfamily. Aliphatic sulfonates importer (TC 3.A.1.17.2) family. As to quaternary structure, the complex is composed of two ATP-binding proteins (SsuB), two transmembrane proteins (SsuC) and a solute-binding protein (SsuA).

Its subcellular location is the cell inner membrane. It catalyses the reaction ATP + H2O + aliphatic sulfonate-[sulfonate-binding protein]Side 1 = ADP + phosphate + aliphatic sulfonateSide 2 + [sulfonate-binding protein]Side 1.. Its function is as follows. Part of the ABC transporter complex SsuABC involved in aliphatic sulfonates import. Responsible for energy coupling to the transport system. In Pseudomonas putida (strain ATCC 47054 / DSM 6125 / CFBP 8728 / NCIMB 11950 / KT2440), this protein is Aliphatic sulfonates import ATP-binding protein SsuB.